A 518-amino-acid chain; its full sequence is Motile sperm domain-containing protein 2 (518 aa).

At 1-496 (MAENHAQNKA…QVQRCIWFQQ (496 aa)) the chain is on the cytoplasmic side. Positions 82–239 (ESSIPRWLLE…HMGGTDPFKY (158 aa)) constitute a CRAL-TRIO domain. A disordered region spans residues 252–308 (PLCENGPITSEDETSSKEDIESDGKETLETISNEEQTPLLKKINPTESTSKAEENEK). Basic and acidic residues predominate over residues 265 to 279 (TSSKEDIESDGKETL). Residues 327-445 (LLHISPAEEL…MEHRLRCHTV (119 aa)) form the MSP domain. Residues 365-366 (RT) form a required for FFAT motif binding and phosphorylated FFAT motif binding region. Residues 497–518 (LLLSLTMLLLAFVTSFFYLLYS) form a helical; Anchor for type IV membrane protein membrane-spanning segment.

In terms of assembly, homooligomer. Interacts (via MSP domain) with STARD3NL (via FFAT motif), RMDN3 (via FFAT motif), OSBPL1A (via FFAT motif) and CERT1 (via FFAT motif). Interacts (via MSP domain) with STARD3 (via phosphorylated FFAT motif); this interaction depends on the critical phosphorylation of STARD3 on 'Ser-209'. Interacts with RB1CC1 (via phosphorylated FFAT motif), MIGA2 (via phosphorylated FFAT motif) and OSBPL1A (via FFAT motif). Highly expressed in CD14(+) monocytes, and at lower levels in neutrophils. Does not show significant expression in B-cells or T-cells.

The protein resides in the endoplasmic reticulum membrane. In terms of biological role, endoplasmic reticulum-anchored protein that mediates the formation of contact sites between the endoplasmic (ER) and endosomes, mitochondria or Golgi through interaction with conventional- and phosphorylated-FFAT-containing organelle-bound proteins. In addition, forms endoplasmic reticulum (ER)-lipid droplets (LDs) contacts through a direct protein-membrane interaction and participates in LDs homeostasis. The attachment mechanism involves an amphipathic helix that has an affinity for lipid packing defects present at the surface of LDs. Promotes migration of primary monocytes and neutrophils, in response to various chemokines. The polypeptide is Motile sperm domain-containing protein 2 (Homo sapiens (Human)).